Consider the following 1255-residue polypeptide: Structural polyprotein (1255 aa).

Residues Met1–Phe33 form a necessary for nucleocapsid assembly and virus assembly region. The host transcription inhibition stretch occupies residues Phe33 to Arg68. Residues Leu41–Leu48 carry the Supraphysiological nuclear export signal motif. Residues Ser44–Val119 are disordered. A glycan (N-linked (GlcNAc...) asparagine; by host) is linked at Asn47. The Nuclear localization signal signature appears at Lys64–Arg68. A compositionally biased stretch (basic residues) spans Gly80–Lys92. A binding to the viral RNA region spans residues Ala91 to Thr127. A phosphothreonine mark is found at Thr93 and Thr108. Positions Asn104–Met118 are enriched in basic residues. The segment at Pro112–Lys126 is ribosome-binding. Ser124 is modified (phosphoserine). The region spanning Lys126–Trp275 is the Peptidase S3 domain. A Phosphothreonine modification is found at Thr127. Residue His152 is the Charge relay system of the active site. The segment at Lys168–Tyr173 is interaction with spike glycoprotein E2. Residues Asp174 and Ser226 each act as charge relay system in the active site. Positions Glu260 to Thr264 are interaction with spike glycoprotein E2. Positions Ser276–Val287 are functions as an uncleaved signal peptide for the precursor of protein E3/E2. At Ser276 to Thr701 the chain is on the extracellular side. 7 disulfide bridges follow: Cys282–Cys291, Cys353–Cys457, Cys356–Cys361, Cys424–Cys438, Cys485–Cys600, Cys534–Cys560, and Cys536–Cys554. Asn286 is a glycosylation site (N-linked (GlcNAc...) asparagine; by host). An N-linked (GlcNAc...) asparagine; by host glycan is attached at Asn652. The chain crosses the membrane as a helical span at residues Ile702–Leu722. At Leu723 to Ala757 the chain is on the cytoplasmic side. Positions Lys725–Ser729 are interaction with the capsid protein. 3 S-palmitoyl cysteine; by host lipidation sites follow: Cys730, Cys750, and Cys751. The transient transmembrane before p62-6K protein processing stretch occupies residues Cys730–Cys750. A disulfide bond links Cys730 and Cys751. Residues Glu758–Gln772 are Extracellular-facing. Residues Gln773 to Leu793 form a helical membrane-spanning segment. Position 794 (Arg794) is a topological domain, cytoplasmic. The chain crosses the membrane as a helical span at residues Cys795–Glu815. Over His816–Ser1225 the chain is Extracellular. Intrachain disulfides connect Cys862-Cys927, Cys875-Cys907, Cys876-Cys909, and Cys881-Cys891. Residues Val897–Thr914 form an E1 fusion peptide loop region. 2 N-linked (GlcNAc...) asparagine; by host glycosylation sites follow: Asn947 and Asn1083. 4 cysteine pairs are disulfide-bonded: Cys1072/Cys1084, Cys1114/Cys1189, Cys1119/Cys1193, and Cys1141/Cys1183. The chain crosses the membrane as a helical span at residues Leu1226–Met1246. The Cytoplasmic portion of the chain corresponds to Tyr1247–Asn1255.

Homodimer. Homomultimer. Interacts with host karyopherin KPNA4; this interaction allows the nuclear import of the viral capsid protein. Interacts with spike glycoprotein E2. Interacts with host IRAK1; the interaction leads to inhibition of IRAK1-dependent signaling. Part of a tetrameric complex composed of host CRM1, host importin alpha/beta dimer and the viral capsid; this complex blocks the receptor-mediated transport through the nuclear pore. Interacts with host phosphatase PPP1CA; this interaction dephosphorylates the capsid protein, which increases its ability to bind to the viral genome. In terms of assembly, the precursor of protein E3/E2 and E1 form a heterodimer shortly after synthesis. As to quaternary structure, interacts with spike glycoprotein E2. The precursor of protein E3/E2 and E1 form a heterodimer shortly after synthesis. Processing of the precursor of protein E3/E2 into E2 and E3 results in a heterodimer of the spike glycoproteins E2 and E1. Spike at virion surface are constituted of three E2-E1 heterodimers. After target cell attachment and endocytosis, E1 change conformation to form homotrimers. Interacts with 6K protein. Interacts with host LDLRAD3; this interaction mediates viral entry to the host cell. Interacts with spike glycoprotein E1. Processing of the precursor of protein E3/E2 into E2 and E3 results in a heterodimer of the spike glycoproteins E2 and E1. Spike at virion surface are constituted of a trimer of E2-E1 heterodimers. Interacts with 6K protein. Interacts with host LDLRAD3; this interaction mediates viral entry to the host cell. In terms of assembly, oligomer. Interacts with spike glycoprotein E1. Interacts with spike glycoprotein E2. Structural polyprotein: Specific enzymatic cleavages in vivo yield mature proteins. Capsid protein is auto-cleaved during polyprotein translation, unmasking a signal peptide at the N-terminus of the precursor of E3/E2. The remaining polyprotein is then targeted to the host endoplasmic reticulum, where host signal peptidase cleaves it into pE2, 6K and E1 proteins. pE2 is further processed to mature E3 and E2 by host furin in trans-Golgi vesicle. In terms of processing, phosphorylated on serine and threonine residues. Post-translationally, palmitoylated via thioester bonds. These palmitoylations may induce disruption of the C-terminus transmembrane. This would result in the reorientation of E2 C-terminus from lumenal to cytoplasmic side. N-glycosylated. In terms of processing, palmitoylated via thioester bonds.

It localises to the virion. Its subcellular location is the host cytoplasm. It is found in the host cell membrane. The protein resides in the host nucleus. The protein localises to the virion membrane. It localises to the host Golgi apparatus. Its subcellular location is the host trans-Golgi network. It is found in the host endoplasmic reticulum. The enzyme catalyses Autocatalytic release of the core protein from the N-terminus of the togavirus structural polyprotein by hydrolysis of a -Trp-|-Ser- bond.. Forms an icosahedral capsid with a T=4 symmetry composed of 240 copies of the capsid protein surrounded by a lipid membrane through which penetrate 80 spikes composed of trimers of E1-E2 heterodimers. The capsid protein binds to the viral RNA genome at a site adjacent to a ribosome binding site for viral genome translation following genome release. Possesses a protease activity that results in its autocatalytic cleavage from the nascent structural protein. Following its self-cleavage, the capsid protein transiently associates with ribosomes, and within several minutes the protein binds to viral RNA and rapidly assembles into icosahedric core particles. The resulting nucleocapsid eventually associates with the cytoplasmic domain of the spike glycoprotein E2 at the cell membrane, leading to budding and formation of mature virions. In case of infection, new virions attach to target cells and after clathrin-mediated endocytosis their membrane fuses with the host endosomal membrane. This leads to the release of the nucleocapsid into the cytoplasm, followed by an uncoating event necessary for the genomic RNA to become accessible. The uncoating might be triggered by the interaction of capsid proteins with ribosomes. Binding of ribosomes would release the genomic RNA since the same region is genomic RNA-binding and ribosome-binding. Specifically inhibits interleukin-1 receptor-associated kinase 1/IRAK1-dependent signaling during viral entry, representing a means by which the alphaviruses may evade innate immune detection and activation prior to viral gene expression. Inhibits host transcription. Forms a tetrameric complex with XPO1/CRM1 and the nuclear import receptor importin. This complex blocks the central channel of host nuclear pores thereby inhibiting the receptor-mediated nuclear transport and thus the host mRNA and rRNA transcription. The inhibition of transcription is linked to a cytopathic effect on the host cell. In terms of biological role, provides the signal sequence for the translocation of the precursor of protein E3/E2 to the host endoplasmic reticulum. Furin-cleaved E3 remains associated with spike glycoprotein E1 and mediates pH protection of the latter during the transport via the secretory pathway. After virion release from the host cell, the assembly protein E3 is gradually released in the extracellular space. Its function is as follows. Plays a role in viral attachment to target host cell, by binding to the cell receptor LDLRAD3. Synthesized as a p62 precursor which is processed by furin at the cell membrane just before virion budding, giving rise to E2-E1 heterodimer. The p62-E1 heterodimer is stable, whereas E2-E1 is unstable and dissociate at low pH. p62 is processed at the last step, presumably to avoid E1 fusion activation before its final export to cell surface. E2 C-terminus contains a transitory transmembrane that would be disrupted by palmitoylation, resulting in reorientation of the C-terminal tail from lumenal to cytoplasmic side. This step is critical since E2 C-terminus is involved in budding by interacting with capsid proteins. This release of E2 C-terminus in cytoplasm occurs lately in protein export, and precludes premature assembly of particles at the endoplasmic reticulum membrane. Functionally, acts as a viroporin that participates in virus glycoprotein processing and transport to the plasma membrane, cell permeabilization and budding of viral particles. Disrupts the calcium homeostasis of the cell, probably at the endoplasmic reticulum level. This leads to cytoplasmic calcium elevation. Because of its lipophilic properties, the 6K protein is postulated to influence the selection of lipids that interact with the transmembrane domains of the glycoproteins, which, in turn, affects the deformability of the bilayer required for the extreme curvature that occurs as budding proceeds. Present in low amount in virions, about 3% compared to viral glycoproteins. Class II viral fusion protein. Fusion activity is inactive as long as E1 is bound to E2 in mature virion. After virus attachment to cell receptor LDLRAD3 and endocytosis, acidification of the endosome induce dissociation of E1/E2 heterodimer and concomitant trimerization of the E1 subunits. This E1 trimer is fusion active, and promotes release of viral nucleocapsid in cytoplasm after endosome and viral membrane fusion. Efficient fusion requires the presence of cholesterol and sphingolipid in the target membrane. This chain is Structural polyprotein, found in Venezuelan equine encephalitis virus (strain 3880) (VEEV).